A 293-amino-acid polypeptide reads, in one-letter code: Beta-lactamase (293 aa).

An N-terminal signal peptide occupies residues 1–27 (MRFTATVLSRVATGLALGLSMATASLA). Ser74 acts as the Acyl-ester intermediate in catalysis. 238–240 (KSG) provides a ligand contact to substrate.

Belongs to the class-A beta-lactamase family.

The protein resides in the periplasm. The enzyme catalyses a beta-lactam + H2O = a substituted beta-amino acid. Functionally, hydrolyzes beta-lactams antibiotics. Rates of hydrolysis relative to benzylpenicillin =100: ampicillin = 27, carbenicillin = 25, cloxacillin = 0, cephaloridine = 4. This chain is Beta-lactamase, found in Rhodobacter capsulatus (Rhodopseudomonas capsulata).